The chain runs to 152 residues: Endoribonuclease YbeY (152 aa).

Histidine 101, histidine 105, and histidine 111 together coordinate Zn(2+). The segment at 132–152 (PSSLIERTTKPAKKAAKRKKR) is disordered. Positions 141–152 (KPAKKAAKRKKR) are enriched in basic residues.

This sequence belongs to the endoribonuclease YbeY family. Zn(2+) is required as a cofactor.

Its subcellular location is the cytoplasm. In terms of biological role, single strand-specific metallo-endoribonuclease involved in late-stage 70S ribosome quality control and in maturation of the 3' terminus of the 16S rRNA. The polypeptide is Endoribonuclease YbeY (Koribacter versatilis (strain Ellin345)).